The following is a 262-amino-acid chain: High-affinity zinc uptake system membrane protein ZnuB (262 aa).

Helical transmembrane passes span 8–28 (GWLAGVLLSLTTGPLGSFIVW), 54–74 (INSFYAILILMSFIAIILAWL), 84–104 (TVLNIISHSSLSLGMVFISLI), 129–149 (ITISISSILILSILLFRWHSI), 179–199 (FTIAIAIKFVGALLITSLLII), 215–235 (VIIAIIVSILSVTGGISLSVF), and 238–254 (TPASPSIVLCSSFLCLI).

It belongs to the ABC-3 integral membrane protein family.

The protein localises to the cell membrane. Its function is as follows. Involved in the high-affinity zinc uptake transport system. The chain is High-affinity zinc uptake system membrane protein ZnuB (znuB) from Buchnera aphidicola subsp. Acyrthosiphon pisum (strain APS) (Acyrthosiphon pisum symbiotic bacterium).